Consider the following 276-residue polypeptide: NADH-cytochrome b5 reductase 2 (276 aa).

Residues 15–127 enclose the FAD-binding FR-type domain; it reads EAKYPLPLIE…RGPRGRLFYH (113 aa). The residue at position 17 (Lys-17) is an N6-acetyllysine. Phosphotyrosine is present on Tyr-18. FAD is bound by residues 107–137 and 146–181; these read ENMK…IRPD and LADH…RMSL.

The protein belongs to the flavoprotein pyridine nucleotide cytochrome reductase family. The cofactor is FAD. As to expression, restricted expression.

The catalysed reaction is 2 Fe(III)-[cytochrome b5] + NADH = 2 Fe(II)-[cytochrome b5] + NAD(+) + H(+). In terms of biological role, NADH-cytochrome b5 reductases are involved in desaturation and elongation of fatty acids, cholesterol biosynthesis, drug metabolism, and, in erythrocyte, methemoglobin reduction. Responsible for NADH-dependent lucigenin chemiluminescence in spermatozoa by reducing both lucigenin and 2-[4-iodophenyl]-3-[4-nitrophenyl]-5-[2,4-disulfophenyl]-2H tetrazolium monosodium salt (WST-1). The polypeptide is NADH-cytochrome b5 reductase 2 (Homo sapiens (Human)).